Consider the following 288-residue polypeptide: MLFKDQLFLASQYAAPHHLVSRLMGLAADCRTPAIKNWMISRFVRRYGVDMSEALVQDPLAYDTFNQFFTRKLRADARPLDTEPGAVLCPADGAISQLGPIEHGRIFQAKGHSYSLTSLLGGDPARAEPFMGGDFATIYLSPRDYHRVHMPCAGTLREMVHVPGRLFSVNPLTATHVPELFARNERVACLFDTEYGPMAMVLVGAMIVASIETAWAGLVTPHKRQIRAQRYDEAARAPIHLDKGAEMGLFKLGSTVIVLFGPGRVRWTDTPSVRGPVRMGELLALPKA.

Catalysis depends on charge relay system; for autoendoproteolytic cleavage activity residues aspartate 92, histidine 149, and serine 254. The Schiff-base intermediate with substrate; via pyruvic acid; for decarboxylase activity role is filled by serine 254. Position 254 is a pyruvic acid (Ser); by autocatalysis (serine 254).

The protein belongs to the phosphatidylserine decarboxylase family. PSD-B subfamily. Prokaryotic type I sub-subfamily. In terms of assembly, heterodimer of a large membrane-associated beta subunit and a small pyruvoyl-containing alpha subunit. Requires pyruvate as cofactor. Is synthesized initially as an inactive proenzyme. Formation of the active enzyme involves a self-maturation process in which the active site pyruvoyl group is generated from an internal serine residue via an autocatalytic post-translational modification. Two non-identical subunits are generated from the proenzyme in this reaction, and the pyruvate is formed at the N-terminus of the alpha chain, which is derived from the carboxyl end of the proenzyme. The autoendoproteolytic cleavage occurs by a canonical serine protease mechanism, in which the side chain hydroxyl group of the serine supplies its oxygen atom to form the C-terminus of the beta chain, while the remainder of the serine residue undergoes an oxidative deamination to produce ammonia and the pyruvoyl prosthetic group on the alpha chain. During this reaction, the Ser that is part of the protease active site of the proenzyme becomes the pyruvoyl prosthetic group, which constitutes an essential element of the active site of the mature decarboxylase.

It is found in the cell membrane. The enzyme catalyses a 1,2-diacyl-sn-glycero-3-phospho-L-serine + H(+) = a 1,2-diacyl-sn-glycero-3-phosphoethanolamine + CO2. It functions in the pathway phospholipid metabolism; phosphatidylethanolamine biosynthesis; phosphatidylethanolamine from CDP-diacylglycerol: step 2/2. Catalyzes the formation of phosphatidylethanolamine (PtdEtn) from phosphatidylserine (PtdSer). The chain is Phosphatidylserine decarboxylase proenzyme from Bordetella petrii (strain ATCC BAA-461 / DSM 12804 / CCUG 43448).